A 515-amino-acid chain; its full sequence is Gap junction alpha-9 protein (515 aa).

At 1-19 (MGDWNLLGDTLEEVHIHST) the chain is on the cytoplasmic side. The chain crosses the membrane as a helical span at residues 20-40 (MIGKIWLTILFIFRMLVLGVA). Residues 41–77 (AEDVWNDEQSGFICNTEQPGCRNVCYDQAFPISLIRY) lie on the Extracellular side of the membrane. A helical membrane pass occupies residues 78–98 (WVLQVIFVSSPSLVYMGHALY). The Cytoplasmic portion of the chain corresponds to 99 to 166 (RLRVLEEERQ…YVIHIFTRSV (68 aa)). The helical transmembrane segment at 167–187 (VEVGFMIGQYLLYGFHLEPLF) threads the bilayer. The Extracellular segment spans residues 188-209 (KCHGHPCPNIIDCFVSRPTEKT). The chain crosses the membrane as a helical span at residues 210–230 (IFLLFMQSIATISLFLNILEI). Residues 231-515 (FHLGFKKIKR…GRRVPTDLQI (285 aa)) lie on the Cytoplasmic side of the membrane. The segment covering 370–380 (KRETEGKDSKR) has biased composition (basic and acidic residues). 2 disordered regions span residues 370 to 400 (KRET…GENN) and 428 to 472 (SSTE…NTAD). Positions 456-472 (PPSQGDSQSLDIPNTAD) are enriched in polar residues.

The protein belongs to the connexin family. Alpha-type (group II) subfamily. In terms of assembly, a connexon is composed of a hexamer of connexins. In terms of tissue distribution, highly abundant in skeletal muscle. Also detected in testis.

It is found in the cell membrane. Its subcellular location is the cell junction. The protein resides in the gap junction. One gap junction consists of a cluster of closely packed pairs of transmembrane channels, the connexons, through which materials of low MW diffuse from one cell to a neighboring cell. This chain is Gap junction alpha-9 protein (GJA9), found in Homo sapiens (Human).